A 213-amino-acid chain; its full sequence is Proteasome subunit beta 1 (213 aa).

A propeptide spans 1–18 (MVFIAVFNGVFAMSSLPG) (removed in mature form; by autocatalysis). Catalysis depends on T19, which acts as the Nucleophile.

The protein belongs to the peptidase T1B family. The 20S proteasome core is composed of 14 alpha and 14 beta subunits that assemble into four stacked heptameric rings, resulting in a barrel-shaped structure. The two inner rings, each composed of seven catalytic beta subunits, are sandwiched by two outer rings, each composed of seven alpha subunits. The catalytic chamber with the active sites is on the inside of the barrel. Has a gated structure, the ends of the cylinder being occluded by the N-termini of the alpha-subunits. Is capped at one or both ends by the proteasome regulatory ATPase, PAN.

It localises to the cytoplasm. It catalyses the reaction Cleavage of peptide bonds with very broad specificity.. Its activity is regulated as follows. The formation of the proteasomal ATPase PAN-20S proteasome complex, via the docking of the C-termini of PAN into the intersubunit pockets in the alpha-rings, triggers opening of the gate for substrate entry. Interconversion between the open-gate and close-gate conformations leads to a dynamic regulation of the 20S proteasome proteolysis activity. In terms of biological role, component of the proteasome core, a large protease complex with broad specificity involved in protein degradation. This is Proteasome subunit beta 1 from Staphylothermus marinus (strain ATCC 43588 / DSM 3639 / JCM 9404 / F1).